The sequence spans 193 residues: Putative manganese efflux pump MntP (193 aa).

Transmembrane regions (helical) follow at residues 3-23 (MYAT…ASIC), 41-61 (LIFG…GLYA), 65-85 (IIEW…CRMI), 106-126 (IVLI…GIGL), 133-153 (IVHT…LGML), and 169-189 (IGGL…LELF).

The protein belongs to the MntP (TC 9.B.29) family.

The protein localises to the cell inner membrane. Its function is as follows. Probably functions as a manganese efflux pump. The polypeptide is Putative manganese efflux pump MntP (Photorhabdus laumondii subsp. laumondii (strain DSM 15139 / CIP 105565 / TT01) (Photorhabdus luminescens subsp. laumondii)).